The primary structure comprises 92 residues: Cell division topological specificity factor (92 aa).

The protein belongs to the MinE family.

Prevents the cell division inhibition by proteins MinC and MinD at internal division sites while permitting inhibition at polar sites. This ensures cell division at the proper site by restricting the formation of a division septum at the midpoint of the long axis of the cell. In Symbiobacterium thermophilum (strain DSM 24528 / JCM 14929 / IAM 14863 / T), this protein is Cell division topological specificity factor.